The sequence spans 944 residues: Protein unc-45 homolog A (944 aa).

Residues 1-25 form a disordered region; it reads MTVSGPETPEPRPSDPGASSAEQLR. TPR repeat units follow at residues 21-54, 58-91, and 92-125; these read AEQL…GATP, AILH…DGGD, and VKAL…EPKN. Residue Lys-70 is modified to N6-acetyllysine. Lys-483 carries the post-translational modification N6-acetyllysine.

Interacts with PGR isoforms A and B as well as with NR3C1 in the absence of ligand, and with HSP90AB1. Binding to HSP90AB1 involves 2 UNC45A monomers per HSP90AB1 dimer. Detected in spleen, bone marrow, lung and ovary, and at lower levels in testis, kidney, heart and brain (at protein level). Ubiquitous. Detected in uterus, large intestine, kidney, spleen, lung, brain, liver and ovary.

Its subcellular location is the cytoplasm. It localises to the perinuclear region. The protein resides in the nucleus. Functionally, may act as co-chaperone for HSP90 (Potential). Prevents the stimulation of HSP90AB1 ATPase activity by AHSA1. Positive factor in promoting PGR function in the cell. May be necessary for proper folding of myosin (Potential). Necessary for normal cell proliferation. Necessary for normal myotube formation and myosin accumulation during muscle cell development. May play a role in erythropoiesis in stroma cells in the spleen. The chain is Protein unc-45 homolog A (Unc45a) from Mus musculus (Mouse).